The sequence spans 372 residues: MAEKLHISVLCGGQSTEHEISIQSAKNIVNTLDAAKYLISVIFIVHVGRWYLIDQPEMFLAHSPDHLVKEGSARPITIAFGDAAKPWQSLNGDGRRYSADCVFPMVHGTQGEDGALQGLLELLNLPYVGANVQSSAVCMEKDLTKTVLRAGGIPVVDWHTLSPRDATEGVYQRLLDRWGTSELFVKAVSLGSSVATLPVKTETEFTKAVKEVFRYDDRLMVEPRIRGREIECAVLGNGAPKASLPGEIIPHHDYYSYDAKYLDPNGATTTTSVDLSESVTKQIQQIAIDAFKMVHCSGMARVDFFVTPNNKVLVNEINTIPGFTNISMYPKMWEASGLPCPNLLDQLIELAIDRHQEQQKLIRRYEVKARSL.

An ATP-grasp domain is found at 145 to 349 (KTVLRAGGIP…CPNLLDQLIE (205 aa)). An ATP-binding site is contributed by 176-231 (DRWGTSELFVKAVSLGSSVATLPVKTETEFTKAVKEVFRYDDRLMVEPRIRGREIE). Mg(2+) contacts are provided by Asp303, Glu316, and Asn318.

Belongs to the D-alanine--D-alanine ligase family. The cofactor is Mg(2+). It depends on Mn(2+) as a cofactor.

It is found in the cytoplasm. The catalysed reaction is 2 D-alanine + ATP = D-alanyl-D-alanine + ADP + phosphate + H(+). The protein operates within cell wall biogenesis; peptidoglycan biosynthesis. Cell wall formation. In Coxiella burnetii (strain RSA 331 / Henzerling II), this protein is D-alanine--D-alanine ligase.